Reading from the N-terminus, the 345-residue chain is Nuclear distribution protein nudE-like 1 (345 aa).

Positions 28 to 190 (QSFQEARDEL…LAVRERQQEV (163 aa)) form a coiled coil. A self-association region spans residues 56 to 166 (VQAEQRNRDL…LDEKESLLVS (111 aa)). An interaction with KATNB1 region spans residues 64-189 (DLQADNQRLK…ELAVRERQQE (126 aa)). The required for interaction with PAFAH1B1 stretch occupies residues 114–133 (YVRELEQANDDLERAKRATI). An interaction with CENPF region spans residues 175–345 (RDLRQELAVR…SAPGMLPLSV (171 aa)). The interval 189–256 (EVTRKSAPSS…SARISALNIV (68 aa)) is interaction with YWHAE. Positions 191-345 (TRKSAPSSPT…SAPGMLPLSV (155 aa)) are interaction with NEFL. The segment at 195-256 (APSSPTLDCE…SARISALNIV (62 aa)) is interaction with KATNA1. Serine 215 is modified (phosphoserine). The tract at residues 217-240 (PATPVGKGTENSFPSPKAIPNGFG) is disordered. Phosphothreonine is present on threonine 219. Phosphoserine is present on serine 231. The segment at 241–280 (TSPLTPSARISALNIVGDLLRKVGALESKLAACRNFAKDQ) is interaction with DISC1. Position 242 is a phosphoserine; by CDK1 (serine 242). Threonine 245 is modified (phosphothreonine; by CDK1 and MAPK1). Residues 256-291 (VGDLLRKVGALESKLAACRNFAKDQASRKSYVPGSV) are required for localization to the centrosome and interaction with dynein, dynactin, tubulin gamma, PCM1 and PCNT. Cysteine 273 carries the S-palmitoyl cysteine; by ZDHHC2, ZDHHC3 and ZDHHC7 lipid modification. A disordered region spans residues 314–345 (KGAVNGFDPAPPPPGLGSSRPSSAPGMLPLSV). Positions 329 to 339 (LGSSRPSSAPG) are enriched in low complexity. Serine 344 is modified (phosphoserine).

The protein belongs to the nudE family. As to quaternary structure, interacts with PLEKHM1 (via N- and C-terminus). Interacts with dynactin, PCM1 and PCNT. Interacts (via C-terminus) with CENPF. Self-associates. Interacts with DISC1, dynein, tubulin gamma, KATNA1, KATNB1, microtubules, PAFAHB1 and YWHAE. Interacts directly with NEFL and indirectly with NEFH. Interacts with ZNF365. Interacts with GTP-bound RAB9A; the interaction may lead to RAB9A-dynein motor tethering. Phosphorylated by CDK1 and MAPK1. Phosphorylated in mitosis. Phosphorylated by CDK5. Phosphorylation by CDK5 promotes interaction with KATNA1 and YWHAE. In terms of processing, palmitoylation at Cys-273 reduces affinity for dynein. In terms of tissue distribution, expressed in brain, liver, lung and testis (at protein level). Expressed in brain, epididymis, eye, heart, kidney, large intestine, liver, ovary, pancreas, prostate, skeletal muscle, smooth muscle, spleen, submaxillary gland, testis, thymus and thyroid. Within the brain expression is pronounced in the cortex, hippocampus, olfactory bulb, striatum, thalamic and hypothalamic structures and in the molecular layer of the cerebellum. Largely excluded from cortical progenitor cells which express NDE1.

The protein resides in the cytoplasm. It is found in the cytoskeleton. It localises to the microtubule organizing center. Its subcellular location is the centrosome. The protein localises to the chromosome. The protein resides in the centromere. It is found in the kinetochore. It localises to the spindle. Its function is as follows. Required for organization of the cellular microtubule array and microtubule anchoring at the centrosome. May regulate microtubule organization at least in part by targeting the microtubule severing protein KATNA1 to the centrosome. Also positively regulates the activity of the minus-end directed microtubule motor protein dynein. May enhance dynein-mediated microtubule sliding by targeting dynein to the microtubule plus ends. Required for several dynein- and microtubule-dependent processes such as the maintenance of Golgi integrity, the centripetal motion of secretory vesicles and the coupling of the nucleus and centrosome. Also required during brain development for the migration of newly formed neurons from the ventricular/subventricular zone toward the cortical plate. Plays a role, together with DISC1, in the regulation of neurite outgrowth. Required for mitosis in some cell types but appears to be dispensible for mitosis in cortical neuronal progenitors, which instead requires NDE1. Facilitates the polymerization of neurofilaments from the individual subunits NEFH and NEFL. Positively regulates lysosome peripheral distribution and ruffled border formation in osteoclasts. Plays a role, together with DISC1, in the regulation of neurite outgrowth. May act as a RAB9A/B effector that tethers RAB9-associated late endosomes to the dynein motor for their retrograde transport to the trans-Golgi network. The chain is Nuclear distribution protein nudE-like 1 from Mus musculus (Mouse).